Consider the following 284-residue polypeptide: 4-hydroxybenzoate octaprenyltransferase (284 aa).

The next 7 helical transmembrane spans lie at 33 to 53 (VIAA…LGVF), 93 to 113 (IGLF…MNPL), 136 to 156 (HIPQ…AWAA), 159 to 179 (GELP…TIAY), 209 to 229 (LIIG…GQFY), 235 to 252 (YYWT…QQHL), and 264 to 284 (AFLN…VAFW).

This sequence belongs to the UbiA prenyltransferase family. Mg(2+) is required as a cofactor.

It is found in the cell inner membrane. It catalyses the reaction all-trans-octaprenyl diphosphate + 4-hydroxybenzoate = 4-hydroxy-3-(all-trans-octaprenyl)benzoate + diphosphate. It participates in cofactor biosynthesis; ubiquinone biosynthesis. Functionally, catalyzes the prenylation of para-hydroxybenzoate (PHB) with an all-trans polyprenyl group. Mediates the second step in the final reaction sequence of ubiquinone-8 (UQ-8) biosynthesis, which is the condensation of the polyisoprenoid side chain with PHB, generating the first membrane-bound Q intermediate 3-octaprenyl-4-hydroxybenzoate. In Vibrio parahaemolyticus serotype O3:K6 (strain RIMD 2210633), this protein is 4-hydroxybenzoate octaprenyltransferase.